A 505-amino-acid chain; its full sequence is MTRPKPVALCILDGWGLSERREGNAPLLADTPNMDRLMATCPHATLTTFGPDVGLPSGQMGNSEVGHTNIGAGRVVAMDLGQIDLAIEEGLFAQNSRLRAFIVTLQDSGGTAHLMGVVSDGGVHGHINHMIAAAKALADENIPVVIHALTDGRDVAPRSALGYFETLQAALPDGVEIATVTGRYFAMDRDNRWDRVSKAYQAIVTGTGRKAASASDAVDQAYGQGENDEFISPTVLGGYTGAKDNDGFFCLNFRADRAREIMAAIGDPDFTAFETGARPKWASLMGMAQYSEAHANYMTTMYPKPEIVNTLGDWVAQQGLRQYRLAETEKYPHVTFFLNGGEEVSFDGEDRLMPKSPDVATYDLQPEMSSKEVTDAFVAAIEEGYDLIVVNYANPDMVGHTGDLQAAMKACEAVDQGLGRVLAALEKAGGAMIVTADHGNCDVMIDPETGGPHTAHTLNPVPVVVVGAPDGATLRDGRLADLAPTILHLMGLESPKEMTGKCLIS.

The Mn(2+) site is built by D13 and S63. The active-site Phosphoserine intermediate is the S63. Residues H124, 153-154 (RD), R183, R189, 254-257 (RADR), and K330 contribute to the substrate site. Residues D396, H400, D437, H438, and H456 each contribute to the Mn(2+) site.

The protein belongs to the BPG-independent phosphoglycerate mutase family. As to quaternary structure, monomer. Requires Mn(2+) as cofactor.

It catalyses the reaction (2R)-2-phosphoglycerate = (2R)-3-phosphoglycerate. The protein operates within carbohydrate degradation; glycolysis; pyruvate from D-glyceraldehyde 3-phosphate: step 3/5. In terms of biological role, catalyzes the interconversion of 2-phosphoglycerate and 3-phosphoglycerate. The protein is 2,3-bisphosphoglycerate-independent phosphoglycerate mutase of Roseobacter denitrificans (strain ATCC 33942 / OCh 114) (Erythrobacter sp. (strain OCh 114)).